The primary structure comprises 139 residues: MLERIGISLEDGLLEQFDKLIAEKGYVNRSEAIRDLIRDALVQRAFTESSGREERVAVVTLVYDHDSSSLAQKLAHIQHENHRAVVSALHVHMDPHNCLEVLVLRGRGKDVVAMGESLVATKGVKYGKLVPATAGHDLG.

4 residues coordinate Ni(2+): His79, His90, His92, and Cys98.

It belongs to the transcriptional regulatory CopG/NikR family. Ni(2+) serves as cofactor.

In terms of biological role, transcriptional regulator. This chain is Putative nickel-responsive regulator, found in Anaeromyxobacter sp. (strain K).